The primary structure comprises 95 residues: Large ribosomal subunit protein bL27 (95 aa).

The propeptide occupies M1 to F9.

It belongs to the bacterial ribosomal protein bL27 family. Post-translationally, the N-terminus is cleaved by ribosomal processing cysteine protease Prp.

This Agathobacter rectalis (strain ATCC 33656 / DSM 3377 / JCM 17463 / KCTC 5835 / VPI 0990) (Eubacterium rectale) protein is Large ribosomal subunit protein bL27.